The chain runs to 487 residues: UDP-N-acetylmuramoyl-L-alanyl-D-glutamate--2,6-diaminopimelate ligase (487 aa).

2 residues coordinate UDP-N-acetyl-alpha-D-muramoyl-L-alanyl-D-glutamate: L23 and S25. 108–114 provides a ligand contact to ATP; that stretch reads GTNGKTS. UDP-N-acetyl-alpha-D-muramoyl-L-alanyl-D-glutamate-binding positions include 150–151, S177, Q183, and R185; that span reads TT. K217 is subject to N6-carboxylysine. Meso-2,6-diaminopimelate is bound by residues R378, 402–405, G453, and E457; that span reads DNPR. Positions 402–405 match the Meso-diaminopimelate recognition motif motif; that stretch reads DNPR.

This sequence belongs to the MurCDEF family. MurE subfamily. Mg(2+) is required as a cofactor. Carboxylation is probably crucial for Mg(2+) binding and, consequently, for the gamma-phosphate positioning of ATP.

The protein localises to the cytoplasm. The catalysed reaction is UDP-N-acetyl-alpha-D-muramoyl-L-alanyl-D-glutamate + meso-2,6-diaminopimelate + ATP = UDP-N-acetyl-alpha-D-muramoyl-L-alanyl-gamma-D-glutamyl-meso-2,6-diaminopimelate + ADP + phosphate + H(+). It participates in cell wall biogenesis; peptidoglycan biosynthesis. Functionally, catalyzes the addition of meso-diaminopimelic acid to the nucleotide precursor UDP-N-acetylmuramoyl-L-alanyl-D-glutamate (UMAG) in the biosynthesis of bacterial cell-wall peptidoglycan. The sequence is that of UDP-N-acetylmuramoyl-L-alanyl-D-glutamate--2,6-diaminopimelate ligase from Ectopseudomonas mendocina (strain ymp) (Pseudomonas mendocina).